The chain runs to 525 residues: MSGFNFGGTGAPAGGFTFGTAKTATTTPATGFSFSASGTGTGGFNFGTPSQPAATTPSTSLFSLATQTSTTQTPGFNFGTTPASGGTGFSLGISTPKLSLSSTAATPATANTGSFGLGSSTLTNAISGASTSSQGTAPTGFVFGSSTTSAPSTGTTGFSFTSGSASQPGASGFNIGSVGSLAQPTALSGSPFTPATLATTTAGATQPAAATPTAATTSAGSTLFASIAAAPASSSTTVLSLSAPATTAATPTAGTLGFSLKAPGAAPGASTTSTTTTTTTTTTTASTSSSTTTTGFALSLKPLVPAGPSSVAATALPASSTAVGTTTGPAMTYAQLESLINKWSLELEDQERHFLQQATQVNAWDRTLIENGEKITSLHREVEKVKLDQKRLDQELDFILSQQKELEDLLSPLEESVKEQSGTIYLQHADEEREKTYKLAENIDAQLKRMAQDLKDIIEHLNMAGGPADTSDPLQQICKILNAHMDSLQWVDQSSALLQRRVEEASRVCESRRKEQERSLRIAFD.

Position 2 is an N-acetylserine (Ser-2). A run of 5 repeats spans residues 6–7, 46–47, 78–79, 115–116, and 143–144. The segment at 6 to 144 is 5 X 2 AA repeats of F-G; that stretch reads FGGTGAPAGG…GTAPTGFVFG (139 aa). Positions 260–293 are disordered; that stretch reads LKAPGAAPGASTTSTTTTTTTTTTTASTSSSTTT. Residues 269–293 are compositionally biased toward low complexity; that stretch reads ASTTSTTTTTTTTTTTASTSSSTTT. Residues 331 to 461 form a required for centrosome localization region; sequence MTYAQLESLI…QDLKDIIEHL (131 aa). Residues 331-461 are a coiled coil; the sequence is MTYAQLESLI…QDLKDIIEHL (131 aa). Residues Ser-411 and Ser-421 each carry the phosphoserine modification. O-linked (GlcNAc) serine glycosylation occurs at Ser-471.

This sequence belongs to the nucleoporin NSP1/NUP62 family. In terms of assembly, component of the p62 complex, a complex at least composed of NUP62, NUP54, and NUP58. Interacts with NUP88. Interacts with NUTF2. Interacts with HIKESHI. Interacts with OSBPL8. Interacts with CAPG. Interacts with SAS6 and TUBG1 at the centrosome. Interacts with MCM3AP. The inner channel of the NPC has a different redox environment from the cytoplasm and allows the formation of interchain disulfide bonds between some nucleoporins, the significant increase of these linkages upon oxidative stress reduces the permeability of the NPC.

It is found in the nucleus. Its subcellular location is the nuclear pore complex. The protein localises to the cytoplasm. It localises to the cytoskeleton. The protein resides in the spindle pole. It is found in the nucleus envelope. Its subcellular location is the microtubule organizing center. The protein localises to the centrosome. In terms of biological role, essential component of the nuclear pore complex. The N-terminal is probably involved in nucleocytoplasmic transport. The C-terminal is involved in protein-protein interaction probably via coiled-coil formation, promotes its association with centrosomes and may function in anchorage of p62 to the pore complex. Plays a role in mitotic cell cycle progression by regulating centrosome segregation, centriole maturation and spindle orientation. It might be involved in protein recruitment to the centrosome after nuclear breakdown. This is Nuclear pore glycoprotein p62 (Nup62) from Rattus norvegicus (Rat).